The primary structure comprises 608 residues: CTP synthase (608 aa).

The tract at residues 1-271 (MGQAHITKHI…DAYVVRRLGL (271 aa)) is amidoligase domain. Ser-18 is a CTP binding site. Residue Ser-18 participates in UTP binding. ATP contacts are provided by residues 19–24 (SLGKGL) and Asp-76. Mg(2+) is bound by residues Asp-76 and Glu-145. CTP contacts are provided by residues 152 to 154 (DIE), 192 to 197 (KTKPTQ), and Lys-228. UTP-binding positions include 192–197 (KTKPTQ) and Lys-228. One can recognise a Glutamine amidotransferase type-1 domain in the interval 296 to 545 (TIAIVGKYVD…VAAAVAHADR (250 aa)). Gly-359 contacts L-glutamine. Catalysis depends on Cys-386, which acts as the Nucleophile; for glutamine hydrolysis. L-glutamine-binding positions include 387 to 390 (LGLQ), Glu-410, and Arg-471. Active-site residues include His-518 and Glu-520. The disordered stretch occupies residues 550–608 (LPVDLPSEDAPTPENGVPENGAAQTRGVTAGRSGGSIRRGASASRPSVSSNGTAALVSP). The span at 584–594 (GSIRRGASASR) shows a compositional bias: low complexity.

Belongs to the CTP synthase family. Homotetramer.

It carries out the reaction UTP + L-glutamine + ATP + H2O = CTP + L-glutamate + ADP + phosphate + 2 H(+). The catalysed reaction is L-glutamine + H2O = L-glutamate + NH4(+). The enzyme catalyses UTP + NH4(+) + ATP = CTP + ADP + phosphate + 2 H(+). Its pathway is pyrimidine metabolism; CTP biosynthesis via de novo pathway; CTP from UDP: step 2/2. With respect to regulation, allosterically activated by GTP, when glutamine is the substrate; GTP has no effect on the reaction when ammonia is the substrate. The allosteric effector GTP functions by stabilizing the protein conformation that binds the tetrahedral intermediate(s) formed during glutamine hydrolysis. Inhibited by the product CTP, via allosteric rather than competitive inhibition. In terms of biological role, catalyzes the ATP-dependent amination of UTP to CTP with either L-glutamine or ammonia as the source of nitrogen. Regulates intracellular CTP levels through interactions with the four ribonucleotide triphosphates. This chain is CTP synthase, found in Frankia casuarinae (strain DSM 45818 / CECT 9043 / HFP020203 / CcI3).